Consider the following 348-residue polypeptide: Keratocan (348 aa).

The N-terminal stretch at 1-26 (MSRLNLTMEVLLVAFVAVFLTSQVHS) is a signal peptide. The region spanning 40–69 (ACPKECNCPPNFPNAVYCDNKGLKSIPVIP) is the LRRNT domain. Cystine bridges form between Cys41/Cys47 and Cys45/Cys57. LRR repeat units follow at residues 70–92 (PYTW…ALRN), 93–118 (ATQL…ALRA), 119–140 (MSNL…SPLP), 141–163 (AKLE…VFSG), 165–189 (GHLT…SLKG), 190–213 (LNNL…LPPT), 215–234 (TQIF…YFKG), 235–260 (LPKV…VFNL), 262–280 (SILD…PVIS), and 281–303 (SGLE…DICP). Asn92 carries an N-linked (GlcNAc...) (keratan sulfate) asparagine glycan. An N-linked (GlcNAc...) (keratan sulfate) asparagine glycan is attached at Asn259. Asn297 carries N-linked (GlcNAc...) asparagine glycosylation. Cys302 and Cys339 are joined by a disulfide.

Belongs to the small leucine-rich proteoglycan (SLRP) family. SLRP class II subfamily. In terms of processing, glycosylated. Contains keratan sulfate chains. Expressed in eye, where it is found in the corneal epithelial layer and to a lesser extent in the stromal layer (at protein level).

The protein localises to the secreted. It localises to the extracellular space. The protein resides in the extracellular matrix. Functionally, may be important in developing and maintaining corneal transparency and for the structure of the stromal matrix. The polypeptide is Keratocan (Danio rerio (Zebrafish)).